A 65-amino-acid chain; its full sequence is Protein MalX (65 aa).

The protein is Protein MalX (malX) of Klebsiella pneumoniae.